The chain runs to 145 residues: Cytochrome c2 (145 aa).

A signal peptide spans 1–21; it reads MKFQVKALAAIAAFAALPALA. Pyrrolidone carboxylic acid is present on glutamine 22. Heme c-binding residues include cysteine 36, cysteine 39, histidine 40, and methionine 121.

Belongs to the cytochrome c family. Binds 1 heme c group covalently per subunit.

Its subcellular location is the periplasm. Its function is as follows. Cytochrome c2 is found mainly in purple, non-sulfur, photosynthetic bacteria where it functions as the electron donor to the oxidized bacteriochlorophyll in the photophosphorylation pathway. However, it may also have a role in the respiratory chain and is found in some non-photosynthetic bacteria. The sequence is that of Cytochrome c2 (cycA) from Cereibacter sphaeroides (strain ATCC 17023 / DSM 158 / JCM 6121 / CCUG 31486 / LMG 2827 / NBRC 12203 / NCIMB 8253 / ATH 2.4.1.) (Rhodobacter sphaeroides).